Reading from the N-terminus, the 515-residue chain is Methionine--tRNA ligase (515 aa).

The short motif at 13–23 (AYPNGKPHIGH) is the 'HIGH' region element. Positions 300-304 (KMSKS) match the 'KMSKS' region motif. K303 serves as a coordination point for ATP.

Belongs to the class-I aminoacyl-tRNA synthetase family. MetG type 2B subfamily. Monomer.

The protein resides in the cytoplasm. The enzyme catalyses tRNA(Met) + L-methionine + ATP = L-methionyl-tRNA(Met) + AMP + diphosphate. Functionally, is required not only for elongation of protein synthesis but also for the initiation of all mRNA translation through initiator tRNA(fMet) aminoacylation. The sequence is that of Methionine--tRNA ligase from Brucella suis biovar 1 (strain 1330).